A 445-amino-acid polypeptide reads, in one-letter code: Exodeoxyribonuclease 7 large subunit (445 aa).

The protein belongs to the XseA family. As to quaternary structure, heterooligomer composed of large and small subunits.

Its subcellular location is the cytoplasm. The catalysed reaction is Exonucleolytic cleavage in either 5'- to 3'- or 3'- to 5'-direction to yield nucleoside 5'-phosphates.. Bidirectionally degrades single-stranded DNA into large acid-insoluble oligonucleotides, which are then degraded further into small acid-soluble oligonucleotides. The polypeptide is Exodeoxyribonuclease 7 large subunit (Staphylococcus epidermidis (strain ATCC 35984 / DSM 28319 / BCRC 17069 / CCUG 31568 / BM 3577 / RP62A)).